The sequence spans 161 residues: Putative pre-16S rRNA nuclease (161 aa).

This sequence belongs to the YqgF nuclease family.

It is found in the cytoplasm. In terms of biological role, could be a nuclease involved in processing of the 5'-end of pre-16S rRNA. This is Putative pre-16S rRNA nuclease from Prochlorococcus marinus (strain MIT 9313).